Here is a 328-residue protein sequence, read N- to C-terminus: Beta-ketoacyl-[acyl-carrier-protein] synthase III (328 aa).

Active-site residues include Cys-122 and His-255. The ACP-binding stretch occupies residues 256–260 (QANVR). The active site involves Asn-285.

Belongs to the thiolase-like superfamily. FabH family. In terms of assembly, homodimer.

It is found in the cytoplasm. It catalyses the reaction malonyl-[ACP] + acetyl-CoA + H(+) = 3-oxobutanoyl-[ACP] + CO2 + CoA. Its pathway is lipid metabolism; fatty acid biosynthesis. Its function is as follows. Catalyzes the condensation reaction of fatty acid synthesis by the addition to an acyl acceptor of two carbons from malonyl-ACP. Catalyzes the first condensation reaction which initiates fatty acid synthesis and may therefore play a role in governing the total rate of fatty acid production. Possesses both acetoacetyl-ACP synthase and acetyl transacylase activities. Its substrate specificity determines the biosynthesis of branched-chain and/or straight-chain of fatty acids. The sequence is that of Beta-ketoacyl-[acyl-carrier-protein] synthase III from Bordetella avium (strain 197N).